The chain runs to 348 residues: GTPase Obg 1 (348 aa).

The region spanning 1 to 159 (MSFVDEAKIH…HCVLLKLKIV (159 aa)) is the Obg domain. Positions 160–329 (SDVGIIGMPN…LHAQVKKAVV (170 aa)) constitute an OBG-type G domain. Residues 166–173 (GMPNAGKS), 191–195 (FTTLE), 212–215 (DIPG), 279–282 (NKCD), and 310–312 (GDE) contribute to the GTP site. The Mg(2+) site is built by serine 173 and threonine 193.

It belongs to the TRAFAC class OBG-HflX-like GTPase superfamily. OBG GTPase family. In terms of assembly, monomer. The cofactor is Mg(2+).

Its subcellular location is the cytoplasm. An essential GTPase which binds GTP, GDP and possibly (p)ppGpp with moderate affinity, with high nucleotide exchange rates and a fairly low GTP hydrolysis rate. Plays a role in control of the cell cycle, stress response, ribosome biogenesis and in those bacteria that undergo differentiation, in morphogenesis control. The polypeptide is GTPase Obg 1 (Anaplasma marginale (strain Florida)).